A 259-amino-acid polypeptide reads, in one-letter code: Phosphate import ATP-binding protein PstB 1 (259 aa).

One can recognise an ABC transporter domain in the interval 7–254 (VKPEDVYQIN…PDDHRTKDYI (248 aa)). 45 to 52 (GPSGCGKS) lines the ATP pocket.

This sequence belongs to the ABC transporter superfamily. Phosphate importer (TC 3.A.1.7) family. The complex is composed of two ATP-binding proteins (PstB), two transmembrane proteins (PstC and PstA) and a solute-binding protein (PstS).

The protein resides in the cell membrane. It carries out the reaction phosphate(out) + ATP + H2O = ADP + 2 phosphate(in) + H(+). In terms of biological role, part of the ABC transporter complex PstSACB involved in phosphate import. Responsible for energy coupling to the transport system. This Bacillus licheniformis (strain ATCC 14580 / DSM 13 / JCM 2505 / CCUG 7422 / NBRC 12200 / NCIMB 9375 / NCTC 10341 / NRRL NRS-1264 / Gibson 46) protein is Phosphate import ATP-binding protein PstB 1.